The chain runs to 489 residues: uncharacterized protein (489 aa).

Phosphothreonine is present on threonine 26. Serine 27 carries the phosphoserine modification. The next 3 helical transmembrane spans lie at 63-83 (IVYL…IEFA), 182-202 (LVWS…ILCA), and 221-241 (VFKL…IAFL). Disordered stretches follow at residues 260-312 (PKTS…APLE), 401-435 (STLL…VPPS), and 450-489 (PSIN…PVVH). Serine 263 is subject to Phosphoserine. Positions 268-282 (QRGTSSSQPSENDAN) are enriched in polar residues. Residues 450–465 (PSINNVGGSTAPSVNN) are compositionally biased toward polar residues. A compositionally biased stretch (low complexity) spans 477–489 (SRSSTLTERPVVH).

The protein resides in the endoplasmic reticulum membrane. This is an uncharacterized protein from Schizosaccharomyces pombe (strain 972 / ATCC 24843) (Fission yeast).